Consider the following 234-residue polypeptide: Elongation factor Tu (234 aa).

Positions 1–125 constitute a tr-type G domain; it reads KNMITGAAQM…EVDAFIPTPE (125 aa). GTP is bound at residue 47 to 50; sequence NKQD.

This sequence belongs to the TRAFAC class translation factor GTPase superfamily. Classic translation factor GTPase family. EF-Tu/EF-1A subfamily. As to quaternary structure, monomer.

It localises to the cytoplasm. It catalyses the reaction GTP + H2O = GDP + phosphate + H(+). GTP hydrolase that promotes the GTP-dependent binding of aminoacyl-tRNA to the A-site of ribosomes during protein biosynthesis. In Prochlorothrix hollandica, this protein is Elongation factor Tu (tufA).